Reading from the N-terminus, the 108-residue chain is Large ribosomal subunit protein bL31B (108 aa).

Residues 86–108 are disordered; the sequence is KPETVVEDVLPKGKKKSPAKKKK. The span at 97 to 108 shows a compositional bias: basic residues; it reads KGKKKSPAKKKK.

Belongs to the bacterial ribosomal protein bL31 family. Type B subfamily. In terms of assembly, part of the 50S ribosomal subunit.

The sequence is that of Large ribosomal subunit protein bL31B from Chlamydia trachomatis serovar L2 (strain ATCC VR-902B / DSM 19102 / 434/Bu).